The primary structure comprises 335 residues: Teichoic acids export ATP-binding protein TagH (335 aa).

The 221-residue stretch at 26–246 folds into the ABC transporter domain; that stretch reads IKGLFMPKSQ…YDEFVKWFNK (221 aa). An ATP-binding site is contributed by 60 to 67; it reads GINGSGKS.

Belongs to the ABC transporter superfamily. Teichoic acids exporter (TC 3.A.1.104.1) family. As to quaternary structure, the complex is composed of two ATP-binding proteins (TagH) and two transmembrane proteins (TagG).

The protein resides in the cell membrane. It catalyses the reaction ATP + H2O + teichoic acidSide 1 = ADP + phosphate + teichoic acidSide 2.. In terms of biological role, part of the ABC transporter complex TagGH involved in teichoic acids export. Responsible for energy coupling to the transport system. This chain is Teichoic acids export ATP-binding protein TagH, found in Listeria monocytogenes serotype 4b (strain F2365).